The chain runs to 247 residues: Probable transcriptional regulatory protein Glov_1245 (247 aa).

This sequence belongs to the TACO1 family.

Its subcellular location is the cytoplasm. The protein is Probable transcriptional regulatory protein Glov_1245 of Trichlorobacter lovleyi (strain ATCC BAA-1151 / DSM 17278 / SZ) (Geobacter lovleyi).